A 98-amino-acid polypeptide reads, in one-letter code: Leydig cell tumor 10 kDa protein homolog (98 aa).

Disordered regions lie at residues 1-38 (MAQGQRKFQAQKPAKSKAAAAAASARNRGPRKGGRVIA) and 73-98 (SLPKKLALLKASTKKKEASSSTKMPA). The segment covering 16-25 (SKAAAAAASA) has biased composition (low complexity). A compositionally biased stretch (basic residues) spans 28 to 38 (RGPRKGGRVIA). Residues 73 to 83 (SLPKKLALLKA) are compositionally biased toward low complexity.

Belongs to the UPF0390 family.

In terms of biological role, may have a potential role in hypercalcemia of malignancy. The protein is Leydig cell tumor 10 kDa protein homolog of Bos taurus (Bovine).